The following is a 339-amino-acid chain: GTP 3',8-cyclase (339 aa).

The Radical SAM core domain maps to 20 to 241 (NFDRKFEYLR…WTQKQSLSHD (222 aa)). Arg-29 contacts GTP. [4Fe-4S] cluster-binding residues include Cys-36 and Cys-40. Tyr-42 contributes to the S-adenosyl-L-methionine binding site. [4Fe-4S] cluster is bound at residue Cys-43. Arg-78 is a binding site for GTP. Gly-82 is an S-adenosyl-L-methionine binding site. A GTP-binding site is contributed by Thr-109. Ser-133 contacts S-adenosyl-L-methionine. Lys-170 contributes to the GTP binding site. Met-204 lines the S-adenosyl-L-methionine pocket. Residues Cys-267 and Cys-270 each coordinate [4Fe-4S] cluster. 272–274 (RLR) is a GTP binding site. Residue Cys-284 coordinates [4Fe-4S] cluster.

The protein belongs to the radical SAM superfamily. MoaA family. As to quaternary structure, monomer and homodimer. [4Fe-4S] cluster serves as cofactor.

The enzyme catalyses GTP + AH2 + S-adenosyl-L-methionine = (8S)-3',8-cyclo-7,8-dihydroguanosine 5'-triphosphate + 5'-deoxyadenosine + L-methionine + A + H(+). It participates in cofactor biosynthesis; molybdopterin biosynthesis. Its function is as follows. Catalyzes the cyclization of GTP to (8S)-3',8-cyclo-7,8-dihydroguanosine 5'-triphosphate. The protein is GTP 3',8-cyclase of Psychromonas ingrahamii (strain DSM 17664 / CCUG 51855 / 37).